The chain runs to 126 residues: Fluoride-specific ion channel FluC (126 aa).

The next 4 membrane-spanning stretches (helical) occupy residues 7–27 (LWLALGGAVGAVCRQAAVLLL), 36–56 (FPAAVLLINVLGSFLLGLTLA), 74–94 (GVLGAFTTFSTFSTELDGLLL), and 98–118 (GGLALAYAALSVGLGLTAAVA). Residues Gly77 and Thr80 each contribute to the Na(+) site.

It belongs to the fluoride channel Fluc/FEX (TC 1.A.43) family.

The protein localises to the cell membrane. It carries out the reaction fluoride(in) = fluoride(out). Na(+) is not transported, but it plays an essential structural role and its presence is essential for fluoride channel function. Fluoride-specific ion channel. Important for reducing fluoride concentration in the cell, thus reducing its toxicity. This is Fluoride-specific ion channel FluC from Deinococcus radiodurans (strain ATCC 13939 / DSM 20539 / JCM 16871 / CCUG 27074 / LMG 4051 / NBRC 15346 / NCIMB 9279 / VKM B-1422 / R1).